A 197-amino-acid chain; its full sequence is Imidazoleglycerol-phosphate dehydratase (197 aa).

This sequence belongs to the imidazoleglycerol-phosphate dehydratase family.

It localises to the cytoplasm. The catalysed reaction is D-erythro-1-(imidazol-4-yl)glycerol 3-phosphate = 3-(imidazol-4-yl)-2-oxopropyl phosphate + H2O. It functions in the pathway amino-acid biosynthesis; L-histidine biosynthesis; L-histidine from 5-phospho-alpha-D-ribose 1-diphosphate: step 6/9. This is Imidazoleglycerol-phosphate dehydratase from Rhodopseudomonas palustris (strain TIE-1).